A 102-amino-acid polypeptide reads, in one-letter code: Large ribosomal subunit protein bL21 (102 aa).

This sequence belongs to the bacterial ribosomal protein bL21 family. As to quaternary structure, part of the 50S ribosomal subunit. Contacts protein L20.

This protein binds to 23S rRNA in the presence of protein L20. This chain is Large ribosomal subunit protein bL21, found in Cytophaga hutchinsonii (strain ATCC 33406 / DSM 1761 / CIP 103989 / NBRC 15051 / NCIMB 9469 / D465).